A 40-amino-acid chain; its full sequence is 67 kDa serum albumin (40 aa).

Residues Asp1 to Ala40 enclose the Albumin domain. His4 contributes to the Cu cation binding site.

It belongs to the ALB/AFP/VDB family. Plasma.

Its subcellular location is the secreted. Serum albumin, the main protein of plasma, has a good binding capacity for water, Ca(2+), Na(+), K(+), fatty acids, hormones, bilirubin and drugs. Its main function is the regulation of the colloidal osmotic pressure of blood. The protein is 67 kDa serum albumin of Trachemys scripta (Red-eared slider turtle).